Here is a 106-residue protein sequence, read N- to C-terminus: U1-lycotoxin-Ls1b (106 aa).

The signal sequence occupies residues 1 to 19 (MKVLVVVALLVTLISYSSS). The propeptide occupies 20 to 40 (EGIDDPEADELLSLMANEQTR). Cystine bridges form between C43–C58, C50–C67, C57–C85, and C69–C83.

The protein belongs to the neurotoxin 19 (CSTX) family. 04 (U1-Lctx) subfamily. In terms of tissue distribution, expressed by the venom gland.

It is found in the secreted. The protein is U1-lycotoxin-Ls1b of Lycosa singoriensis (Wolf spider).